The sequence spans 1614 residues: Low-density lipoprotein receptor-related protein 5 (1614 aa).

Positions 1–30 (METAPTRAPPPPPPPLLLLVLYCSLVPAAA) are cleaved as a signal peptide. The segment at 31-287 (SPLLLFANRR…YSPMDIQVLS (257 aa)) is beta-propeller 1. Topologically, residues 31–1383 (SPLLLFANRR…PPSDDIPAHS (1353 aa)) are extracellular. LDL-receptor class B repeat units follow at residues 74–118 (GAVY…DWVG), 119–161 (KKLY…DPAH), 162–205 (GYMY…DLEE), 206–246 (QKLY…TLSG), and 247–289 (DTLY…LSQE). N-linked (GlcNAc...) asparagine glycans are attached at residues Asn92 and Asn137. Positions 294-336 (FHTPCEEDNGGCSHLCLLSPREPFYSCACPTGVQLQDNGKTCK) constitute an EGF-like 1 domain. 3 cysteine pairs are disulfide-bonded: Cys298/Cys309, Cys305/Cys320, and Cys322/Cys335. The beta-propeller 2 stretch occupies residues 340–601 (EEVLLLARRT…AVNVAKVVGT (262 aa)). 5 LDL-receptor class B repeats span residues 384–426 (GYVY…DWVA), 427–469 (RNLY…HPVM), 470–513 (GLMY…DLQE), 514–556 (GKLY…LGDF), and 557–599 (IYWT…AKVV). N-linked (GlcNAc...) asparagine glycans are attached at residues Asn445 and Asn498. Residues 600–640 (GTNPCADGNGGCSHLCFFTPRATKCGCPIGLELLSDMKTCI) enclose the EGF-like 2 domain. 3 disulfides stabilise this stretch: Cys604–Cys615, Cys611–Cys624, and Cys626–Cys639. The segment at 643–902 (EAFLVFTSRA…VFHSSRQDGL (260 aa)) is beta-propeller 3. LDL-receptor class B repeat units follow at residues 686-728 (NHIY…DWMG), 729-771 (KNLY…DPTK), 772-814 (GYIY…DYAD), 815-854 (QRLY…TQYS), and 855-897 (DYIY…FHSS). N-linked (GlcNAc...) asparagine glycosylation is present at Asn704. A glycan (N-linked (GlcNAc...) asparagine) is linked at Asn877. The EGF-like 3 domain maps to 901–941 (GLNDCVHSNGQCGQLCLAIPGGHRCGCASHYTLDPSSRNCS). Cystine bridges form between Cys905-Cys916, Cys912-Cys925, and Cys927-Cys940. The tract at residues 944-1211 (STFLLFSQKF…AVEEVSLEEF (268 aa)) is beta-propeller 4. 5 LDL-receptor class B repeats span residues 988-1034 (KFIY…DIYS), 1035-1077 (RTLF…NAER), 1078-1122 (GYMY…DNAL), 1123-1164 (GKLF…VLGR), and 1165-1206 (HLYW…VEEV). Residues 1002 to 1025 (AKDDGTQPSMLTSPSQSLSPDRQP) are disordered. The segment covering 1007–1021 (TQPSMLTSPSQSLSP) has biased composition (polar residues). An EGF-like 4 domain is found at 1212 to 1253 (SAHPCARDNGGCSHICIAKGDGTPRCSCPVHLVLLQNLLTCG). Intrachain disulfides connect Cys1216–Cys1227, Cys1223–Cys1237, Cys1239–Cys1252, Cys1258–Cys1272, Cys1265–Cys1285, Cys1279–Cys1294, Cys1297–Cys1309, Cys1304–Cys1322, Cys1316–Cys1331, Cys1335–Cys1347, Cys1342–Cys1360, and Cys1354–Cys1369. LDL-receptor class A domains follow at residues 1257–1295 (TCSP…EGCP), 1296–1332 (VCSA…ANCD), and 1334–1370 (VCLP…LMCE). Residues 1384–1406 (SAIGPVIGIILSLFVMGGVYFVC) traverse the membrane as a helical segment. Topologically, residues 1407–1614 (QRVMCQRYTG…PPPSPCTDSS (208 aa)) are cytoplasmic. Positions 1474–1498 (RNHVTGASSSSSSSTKATLYPPILN) are disordered. Positions 1499–1505 (PPPSPAT) match the PPPSP motif A motif. Residues 1537–1544 (PPTTPCST) carry the PPPSP motif B motif. Residues 1567–1599 (SDSDPYPPPPTPHSQYLSAEDSCPPSPGTERSY) form a disordered region. The PPPSP motif C signature appears at 1573–1580 (PPPPTPHS). The PPPSP motif D signature appears at 1590 to 1595 (PPSPGT). Positions 1604-1611 (PPPPSPCT) match the PPPSP motif E motif.

It belongs to the LDLR family. Homodimer; disulfide-linked. Forms phosphorylated oligomer aggregates on Wnt-signaling. Component of a WNT-signaling complex that contains a WNT protein, a FZD protein and LRP5 or LRP6. Interacts with FZD8; the interaction is formed on WNT-binding and signaling. Interacts (via the phosphorylated PPPSP motif domains) with AXIN1; the interaction prevents inhibition of beta-catenin phosphorylation and signaling and is enhanced in the presence of GSK3B and WNT1 or WNT3A. Interacts (via beta-propeller regions 3 and 4) with DKK1; the interaction, enhanced by MESD and/or KREMEN, inhibits beta-catenin signaling by preventing GSK3-mediated phosphorylation of the PPPSP motifs and subsequent, AXIN1 binding. Interacts with CSNK1E. Interacts with SOST; the interaction antagonizes canonical Wnt signaling. Interacts with APCDD1. Interacts with MESD; the interaction prevents the formation of LRP5 aggregates, targets LRP5 to the plasma membrane and, when complexed with KREMEN2, increases DKK1 binding. Interacts with CAPRIN2. In terms of processing, phosphorylation of cytoplasmic PPPSP motifs regulates the signal transduction of the Wnt signaling pathway through acting as a docking site for AXIN1. As to expression, widely expressed, with the highest expression levels in liver, heart, and lung and the lowest levels in brain and spleen.

It is found in the membrane. The protein localises to the endoplasmic reticulum. Acts as a coreceptor with members of the frizzled family of seven-transmembrane spanning receptors to transduce signal by Wnt proteins. Activates the canonical Wnt signaling pathway that controls cell fate determination and self-renewal during embryonic development and adult tissue regeneration. In particular, may play an important role in the development of the posterior patterning of the epiblast during gastrulation. During bone development, regulates osteoblast proliferation and differentiation thus determining bone mass. Mechanistically, the formation of the signaling complex between Wnt ligand, frizzled receptor and LRP5 coreceptor promotes the recruitment of AXIN1 to LRP5, stabilizing beta-catenin/CTNNB1 and activating TCF/LEF-mediated transcriptional programs. Acts as a coreceptor for non-Wnt proteins, such as norrin/NDP. Binding of norrin/NDP to frizzled 4/FZD4-LRP5 receptor complex triggers beta-catenin/CTNNB1-dependent signaling known to be required for retinal vascular development. Plays a role in controlling postnatal vascular regression in retina via macrophage-induced endothelial cell apoptosis. In Mus musculus (Mouse), this protein is Low-density lipoprotein receptor-related protein 5.